Reading from the N-terminus, the 561-residue chain is Sesquiterpene synthase 1 (561 aa).

4 residues coordinate Mg(2+): D313, D317, D458, and E466. The DDXXD motif motif lies at D313–D317.

This sequence belongs to the terpene synthase family. Tpsa subfamily. Mn(2+) serves as cofactor. The cofactor is Mg(2+).

Its subcellular location is the cytoplasm. It catalyses the reaction (2E,6E)-farnesyl diphosphate = (1S,8aR)-delta-cadinene + diphosphate. It participates in secondary metabolite biosynthesis; terpenoid biosynthesis. In terms of biological role, involved in the biosynthesis of delta-cadinene. The sequence is that of Sesquiterpene synthase 1 (STS1) from Thapsia garganica (Deadly carrot).